A 428-amino-acid polypeptide reads, in one-letter code: Adenylosuccinate synthetase (428 aa).

Residues 12–18 (GDEGKGK) and 40–42 (GHT) each bind GTP. Asp13 functions as the Proton acceptor in the catalytic mechanism. Asp13 and Gly40 together coordinate Mg(2+). IMP is bound by residues 13–16 (DEGK), 38–41 (NAGH), Thr128, Arg142, Gln223, Thr238, and Arg302. His41 (proton donor) is an active-site residue. 298–304 (VTTKRPR) lines the substrate pocket. Residues Arg304, 330-332 (KLD), and 412-414 (GVG) contribute to the GTP site.

This sequence belongs to the adenylosuccinate synthetase family. As to quaternary structure, homodimer. The cofactor is Mg(2+).

The protein localises to the cytoplasm. The catalysed reaction is IMP + L-aspartate + GTP = N(6)-(1,2-dicarboxyethyl)-AMP + GDP + phosphate + 2 H(+). It participates in purine metabolism; AMP biosynthesis via de novo pathway; AMP from IMP: step 1/2. Its function is as follows. Plays an important role in the de novo pathway of purine nucleotide biosynthesis. Catalyzes the first committed step in the biosynthesis of AMP from IMP. This is Adenylosuccinate synthetase from Cutibacterium acnes (strain DSM 16379 / KPA171202) (Propionibacterium acnes).